A 1011-amino-acid chain; its full sequence is Collagen alpha-2(I) chain (1011 aa).

Residues 1 to 1011 are disordered; it reads SGGFDFSFLP…FGYEGDFYRA (1011 aa). Residues Pro-10, Pro-13, Pro-35, and Pro-41 each carry the 4-hydroxyproline modification. A compositionally biased stretch (low complexity) spans 28-67; the sequence is LMGPRGPPGASGAPGPQGFQGPAGEPGEPGQTGPAGARGP. 5-hydroxylysine; alternate is present on Lys-106. A glycan (O-linked (Gal...) hydroxylysine; alternate) is linked at Lys-106. Over residues 167–182 the composition is skewed to low complexity; that stretch reads SVGPVGPAGPIGSAGP. Residues 282–291 show a composition bias toward gly residues; that stretch reads GESGGKGEPG. Over residues 292-302 the composition is skewed to low complexity; that stretch reads SAGPQGPPGSS. Over residues 323–332 the composition is skewed to gly residues; it reads GLRGGPGSRG. The segment covering 345 to 361 has biased composition (low complexity); that stretch reads PAGARGASGPAGVRGPS. Pro-367 and Pro-370 each carry 4-hydroxyproline. A compositionally biased stretch (low complexity) spans 396 to 415; that stretch reads LPGIDGRPGPIGPAGARGEA. Residues 464–473 show a composition bias toward gly residues; sequence GVQGGKGEQG. Low complexity-rich tracts occupy residues 520 to 537 and 549 to 559; these read PGESGAVGPSGAIGSRGP and EPGVVGAPGTA. The span at 560–578 shows a compositional bias: gly residues; that stretch reads GPAGSGGPGERGAAGIPGG. Composition is skewed to low complexity over residues 588-635 and 642-662; these read RGEV…PRGS and VGPAGPNGFAGPAGAAGQPGA. Basic and acidic residues predominate over residues 663 to 672; the sequence is KGERGTKGPK. A compositionally biased stretch (low complexity) spans 680–690; sequence PTGPVGSAGPA. Residues 700–709 show a composition bias toward gly residues; that stretch reads GSRGDGGPPG. The segment covering 711–720 has biased composition (low complexity); sequence TGFPGAAGRT. Over residues 757–766 the composition is skewed to gly residues; it reads GETGAGGPPG. 2 stretches are compositionally biased toward low complexity: residues 774–801 and 809–819; these read SGEPGTAGPPGTAGPQGLLGAPGILGLP and LPGVAGAVGEP. Gly residues predominate over residues 820–834; sequence GPLGIGPPGARGDGL. Composition is skewed to low complexity over residues 843–856 and 872–887; these read YAGNAGPVGAAGAP and EPGPVGSVGPVGALGP. The segment covering 897 to 908 has biased composition (basic and acidic residues); that stretch reads RGDKGEPGEKGP. The span at 981-993 shows a compositional bias: pro residues; it reads SGPPGPPGPPGPP.

Belongs to the fibrillar collagen family. Trimers of one alpha 2(I) and two alpha 1(I) chains. Interacts (via C-terminus) with TMEM131 (via PapD-L domain); the interaction is direct and is involved in assembly and TRAPPIII ER-to-Golgi transport complex-dependent secretion of collagen. Post-translationally, prolines at the third position of the tripeptide repeating unit (G-X-Y) are hydroxylated in some or all of the chains. Expressed in bones.

The protein resides in the secreted. It is found in the extracellular space. Its subcellular location is the extracellular matrix. Type I collagen is a member of group I collagen (fibrillar forming collagen). The protein is Collagen alpha-2(I) chain of Neocnus comes (Miller's Hispaniolan ground sloth).